The chain runs to 106 residues: Toxin-like structure LSTX-D9 (106 aa).

Residues 1–20 form the signal peptide; that stretch reads MMKVLVVVALLLTLIIYSSS. The propeptide occupies 21–41; it reads DGIDDLEADELVSLMAHEQTR. Disulfide bonds link cysteine 45–cysteine 60, cysteine 52–cysteine 69, cysteine 59–cysteine 85, and cysteine 71–cysteine 83.

It belongs to the neurotoxin 19 (CSTX) family. 02 (D7) subfamily. In terms of tissue distribution, expressed by the venom gland.

Its subcellular location is the secreted. The chain is Toxin-like structure LSTX-D9 from Lycosa singoriensis (Wolf spider).